A 322-amino-acid polypeptide reads, in one-letter code: Lipoyl synthase (322 aa).

Residues C61, C66, C72, C87, C91, C94, and S300 each coordinate [4Fe-4S] cluster. The 217-residue stretch at 73-289 (WDKKHATFMI…ETVAYTKGFL (217 aa)) folds into the Radical SAM core domain.

The protein belongs to the radical SAM superfamily. Lipoyl synthase family. The cofactor is [4Fe-4S] cluster.

The protein localises to the cytoplasm. The catalysed reaction is [[Fe-S] cluster scaffold protein carrying a second [4Fe-4S](2+) cluster] + N(6)-octanoyl-L-lysyl-[protein] + 2 oxidized [2Fe-2S]-[ferredoxin] + 2 S-adenosyl-L-methionine + 4 H(+) = [[Fe-S] cluster scaffold protein] + N(6)-[(R)-dihydrolipoyl]-L-lysyl-[protein] + 4 Fe(3+) + 2 hydrogen sulfide + 2 5'-deoxyadenosine + 2 L-methionine + 2 reduced [2Fe-2S]-[ferredoxin]. The protein operates within protein modification; protein lipoylation via endogenous pathway; protein N(6)-(lipoyl)lysine from octanoyl-[acyl-carrier-protein]: step 2/2. Catalyzes the radical-mediated insertion of two sulfur atoms into the C-6 and C-8 positions of the octanoyl moiety bound to the lipoyl domains of lipoate-dependent enzymes, thereby converting the octanoylated domains into lipoylated derivatives. The sequence is that of Lipoyl synthase from Rhizobium meliloti (strain 1021) (Ensifer meliloti).